A 319-amino-acid chain; its full sequence is Acetyl esterase (319 aa).

Positions 91 to 93 (HGG) match the Involved in the stabilization of the negatively charged intermediate by the formation of the oxyanion hole motif. Residues serine 165, aspartate 262, and histidine 292 contribute to the active site.

The protein belongs to the 'GDXG' lipolytic enzyme family. As to quaternary structure, homodimer. Interacts with MalT and MelA.

The protein localises to the cytoplasm. Displays esterase activity towards short chain fatty esters (acyl chain length of up to 8 carbons). Able to hydrolyze triacetylglycerol (triacetin) and tributyrylglycerol (tributyrin), but not trioleylglycerol (triolein) or cholesterol oleate. Negatively regulates MalT activity by antagonizing maltotriose binding. Inhibits MelA galactosidase activity. The sequence is that of Acetyl esterase from Escherichia coli (strain 55989 / EAEC).